The following is a 405-amino-acid chain: Acetylornithine aminotransferase 1 (405 aa).

Pyridoxal 5'-phosphate-binding positions include 108–109 (GA) and F141. A N(2)-acetyl-L-ornithine-binding site is contributed by R144. 226–229 (DEVQ) is a pyridoxal 5'-phosphate binding site. N6-(pyridoxal phosphate)lysine is present on K255. Residue T283 coordinates N(2)-acetyl-L-ornithine. Pyridoxal 5'-phosphate is bound at residue T284.

It belongs to the class-III pyridoxal-phosphate-dependent aminotransferase family. ArgD subfamily. Homodimer. It depends on pyridoxal 5'-phosphate as a cofactor.

The protein resides in the cytoplasm. It carries out the reaction N(2)-acetyl-L-ornithine + 2-oxoglutarate = N-acetyl-L-glutamate 5-semialdehyde + L-glutamate. Its pathway is amino-acid biosynthesis; L-arginine biosynthesis; N(2)-acetyl-L-ornithine from L-glutamate: step 4/4. The polypeptide is Acetylornithine aminotransferase 1 (Pseudomonas syringae pv. tomato (strain ATCC BAA-871 / DC3000)).